Reading from the N-terminus, the 180-residue chain is Large ribosomal subunit protein uL6 (180 aa).

The protein belongs to the universal ribosomal protein uL6 family. As to quaternary structure, part of the 50S ribosomal subunit.

This protein binds to the 23S rRNA, and is important in its secondary structure. It is located near the subunit interface in the base of the L7/L12 stalk, and near the tRNA binding site of the peptidyltransferase center. This is Large ribosomal subunit protein uL6 from Caldanaerobacter subterraneus subsp. tengcongensis (strain DSM 15242 / JCM 11007 / NBRC 100824 / MB4) (Thermoanaerobacter tengcongensis).